We begin with the raw amino-acid sequence, 580 residues long: Acyl-coenzyme A synthetase ACSM4, mitochondrial (580 aa).

A mitochondrion-targeting transit peptide spans 1 to 22 (MKVLLRCQRLRFIWLAKPAGRH). Residues 229-237 (TSGTTGSPK), 368-373 (EGYGQT), aspartate 455, arginine 470, and lysine 566 contribute to the ATP site.

The protein belongs to the ATP-dependent AMP-binding enzyme family. Mg(2+) is required as a cofactor. The cofactor is Mn(2+). As to expression, detected in adult olfactory epithelium.

The protein resides in the mitochondrion. It catalyses the reaction a medium-chain fatty acid + ATP + CoA = a medium-chain fatty acyl-CoA + AMP + diphosphate. The catalysed reaction is hexanoate + ATP + CoA = hexanoyl-CoA + AMP + diphosphate. The enzyme catalyses octanoate + ATP + CoA = octanoyl-CoA + AMP + diphosphate. It carries out the reaction decanoate + ATP + CoA = decanoyl-CoA + AMP + diphosphate. It catalyses the reaction dodecanoate + ATP + CoA = dodecanoyl-CoA + AMP + diphosphate. Its function is as follows. Catalyzes the activation of fatty acids by CoA to produce an acyl-CoA, the first step in fatty acid metabolism. Capable of activating medium-chain fatty acids with a preference for C6-12 fatty acids. This chain is Acyl-coenzyme A synthetase ACSM4, mitochondrial (Acsm4), found in Rattus norvegicus (Rat).